The following is an 85-amino-acid chain: Small ribosomal subunit protein bS16 (85 aa).

Belongs to the bacterial ribosomal protein bS16 family.

The polypeptide is Small ribosomal subunit protein bS16 (Pelobacter propionicus (strain DSM 2379 / NBRC 103807 / OttBd1)).